Reading from the N-terminus, the 496-residue chain is NADH-quinone oxidoreductase subunit N (496 aa).

Transmembrane regions (helical) follow at residues 12–32, 43–63, 79–99, 108–128, 132–152, 166–186, 207–227, 257–277, 280–300, 306–326, 333–353, 383–403, 416–436, and 464–484; these read LNLI…IILI, SLYV…TLGL, VSIV…PLAL, SYPE…FMVA, LILI…LIAL, FTMG…IYAL, GLMI…AFKL, VAAF…GVEW, VVIL…ALVQ, MLAY…ALDT, IFFY…MLWM, AVIM…SIFW, GYVW…YYYL, and AVVG…QPLV.

Belongs to the complex I subunit 2 family. In terms of assembly, NDH-1 is composed of 14 different subunits. Subunits NuoA, H, J, K, L, M, N constitute the membrane sector of the complex.

Its subcellular location is the cell inner membrane. The catalysed reaction is a quinone + NADH + 5 H(+)(in) = a quinol + NAD(+) + 4 H(+)(out). Functionally, NDH-1 shuttles electrons from NADH, via FMN and iron-sulfur (Fe-S) centers, to quinones in the respiratory chain. The immediate electron acceptor for the enzyme in this species is believed to be ubiquinone. Couples the redox reaction to proton translocation (for every two electrons transferred, four hydrogen ions are translocated across the cytoplasmic membrane), and thus conserves the redox energy in a proton gradient. The sequence is that of NADH-quinone oxidoreductase subunit N from Sulfurovum sp. (strain NBC37-1).